A 501-amino-acid polypeptide reads, in one-letter code: Symplectin (501 aa).

A CN hydrolase domain is found at 20–287; sequence PKTDMETREE…SKLLVAEILP (268 aa). Glutamate 60 serves as the catalytic Proton acceptor. Lysine 163 serves as the catalytic Proton donor. The active-site Nucleophile is cysteine 196. Position 390 is an S-(coelenterazin-3a-yl)cysteine (cysteine 390).

The protein belongs to the carbon-nitrogen hydrolase superfamily. BTD/VNN family. Photogenic gland (at protein level).

In terms of biological role, monovalent ion-dependent bioluminescence photoprotein. Displays an emission peak at 470 nm (blue light). Trace amounts of monovalent ion trigger the intramolecular oxidation of the chromophore, didehydrocoelenterazine, with the emission of light. In Sthenoteuthis oualaniensis (Purpleback flying squid), this protein is Symplectin.